Reading from the N-terminus, the 227-residue chain is MTDSTRDGHASHSLHGGVYPGNLFMVVAPSGAGKSTLVNALLSKDSDICLSISYTTRKPRPGEQDGQHYHFTTVEDFRARHAAHEFLESAEVHGNYYGTSRVWIEEQMRNGHDVLLEIDWQGALQVKKQFRNAVGIFILPPSLDALEERLKKRGQDEPNVITRRLLAAGSEIAHASEAEYVVINENFERALAELECIVAATRLRFASQYARHTELFIDLGVHLPHAE.

Residues 21 to 199 (GNLFMVVAPS…ALAELECIVA (179 aa)) enclose the Guanylate kinase-like domain. 28–35 (APSGAGKS) serves as a coordination point for ATP.

This sequence belongs to the guanylate kinase family.

It localises to the cytoplasm. It carries out the reaction GMP + ATP = GDP + ADP. Essential for recycling GMP and indirectly, cGMP. The protein is Guanylate kinase of Burkholderia orbicola (strain AU 1054).